We begin with the raw amino-acid sequence, 405 residues long: Acetylornithine/succinyldiaminopimelate aminotransferase (405 aa).

Pyridoxal 5'-phosphate contacts are provided by residues 108 to 109 (GT) and phenylalanine 141. Arginine 144 provides a ligand contact to N(2)-acetyl-L-ornithine. A pyridoxal 5'-phosphate-binding site is contributed by 226-229 (DEVQ). Lysine 255 carries the post-translational modification N6-(pyridoxal phosphate)lysine. Residue serine 283 coordinates N(2)-acetyl-L-ornithine. Threonine 284 is a binding site for pyridoxal 5'-phosphate.

This sequence belongs to the class-III pyridoxal-phosphate-dependent aminotransferase family. ArgD subfamily. In terms of assembly, homodimer. It depends on pyridoxal 5'-phosphate as a cofactor.

The protein resides in the cytoplasm. It carries out the reaction N(2)-acetyl-L-ornithine + 2-oxoglutarate = N-acetyl-L-glutamate 5-semialdehyde + L-glutamate. The catalysed reaction is N-succinyl-(2S,6S)-2,6-diaminopimelate + 2-oxoglutarate = (S)-2-succinylamino-6-oxoheptanedioate + L-glutamate. The protein operates within amino-acid biosynthesis; L-arginine biosynthesis; N(2)-acetyl-L-ornithine from L-glutamate: step 4/4. It functions in the pathway amino-acid biosynthesis; L-lysine biosynthesis via DAP pathway; LL-2,6-diaminopimelate from (S)-tetrahydrodipicolinate (succinylase route): step 2/3. Its activity is regulated as follows. Inhibited by gabaculine (Gcn). Involved in both the arginine and lysine biosynthetic pathways. This Salmonella typhimurium (strain LT2 / SGSC1412 / ATCC 700720) protein is Acetylornithine/succinyldiaminopimelate aminotransferase.